The chain runs to 335 residues: Probable calcium-binding protein CML49 (335 aa).

The span at 1 to 10 (MSGYPPSSQG) shows a compositional bias: low complexity. The segment at 1 to 154 (MSGYPPSSQG…PQASYGSPFA (154 aa)) is disordered. Over residues 30–45 (NPPPYGSSGSNPPPPY) the composition is skewed to pro residues. A compositionally biased stretch (low complexity) spans 46–63 (GSSASSPYAVPYGAQPAP). The segment covering 110–141 (DYGGYGGAPQQSGHGGGYGGAPQQSGHGGGYG) has biased composition (gly residues). EF-hand domains are found at residues 164-199 (GTDPNIVACFQAADRDNSGFIDDKELQGALSSYNQS) and 230-265 (FSLQNWRSIFERFDKDRSGRIDTNELRDALMSLGFS). Ca(2+) is bound by residues D177, D179, S181, E188, D243, D245, S247, R249, and E254.

Its function is as follows. Potential calcium sensor. The chain is Probable calcium-binding protein CML49 (CML49) from Arabidopsis thaliana (Mouse-ear cress).